Here is a 146-residue protein sequence, read N- to C-terminus: Hemoglobin subunit beta (146 aa).

An N-acetylvaline modification is found at Val1. The Globin domain maps to 2–146 (HLTADEKAAV…VATALAHKYH (145 aa)). Phosphoserine is present on Ser44. Residue Lys59 is modified to N6-acetyllysine. Position 63 (His63) interacts with heme b. An N6-acetyllysine modification is found at Lys82. His92 is a binding site for heme b. Cys93 bears the S-nitrosocysteine mark. Lys144 carries the N6-acetyllysine modification.

The protein belongs to the globin family. Heterotetramer of two alpha chains and two beta chains. Red blood cells.

Involved in oxygen transport from the lung to the various peripheral tissues. The chain is Hemoglobin subunit beta (HBB) from Myotis velifer (Mouse-eared bat).